We begin with the raw amino-acid sequence, 1058 residues long: Carbamoyl phosphate synthase large chain (1058 aa).

The tract at residues 1 to 401 (MPKRTDIKKI…SLLKACRSLE (401 aa)) is carboxyphosphate synthetic domain. ATP-binding residues include arginine 129, arginine 169, glycine 175, glycine 176, lysine 208, isoleucine 210, glutamate 215, glycine 241, isoleucine 242, histidine 243, glutamine 284, and glutamate 298. The ATP-grasp 1 domain maps to 133–327 (KALMKALKQP…IAKIAAKIAI (195 aa)). Residues glutamine 284, glutamate 298, and asparagine 300 each coordinate Mg(2+). The Mn(2+) site is built by glutamine 284, glutamate 298, and asparagine 300. The segment at 402-546 (IGIYHNECKE…YSTYAFENES (145 aa)) is oligomerization domain. The tract at residues 547 to 929 (QASPNKSILV…ALYKAFEASY (383 aa)) is carbamoyl phosphate synthetic domain. Positions 671–861 (EKALHDINIP…MAQVATKLIL (191 aa)) constitute an ATP-grasp 2 domain. Positions 707, 746, 748, 752, 777, 778, 779, 780, 820, and 832 each coordinate ATP. Mg(2+) is bound by residues glutamine 820, glutamate 832, and asparagine 834. Residues glutamine 820, glutamate 832, and asparagine 834 each coordinate Mn(2+). The MGS-like domain maps to 930–1058 (MHVPDFGNII…ESRSFSIQSL (129 aa)). The tract at residues 930–1058 (MHVPDFGNII…ESRSFSIQSL (129 aa)) is allosteric domain.

The protein belongs to the CarB family. As to quaternary structure, composed of two chains; the small (or glutamine) chain promotes the hydrolysis of glutamine to ammonia, which is used by the large (or ammonia) chain to synthesize carbamoyl phosphate. Tetramer of heterodimers (alpha,beta)4. Mg(2+) serves as cofactor. The cofactor is Mn(2+).

The enzyme catalyses hydrogencarbonate + L-glutamine + 2 ATP + H2O = carbamoyl phosphate + L-glutamate + 2 ADP + phosphate + 2 H(+). It carries out the reaction hydrogencarbonate + NH4(+) + 2 ATP = carbamoyl phosphate + 2 ADP + phosphate + 2 H(+). Its pathway is amino-acid biosynthesis; L-arginine biosynthesis; carbamoyl phosphate from bicarbonate: step 1/1. It functions in the pathway pyrimidine metabolism; UMP biosynthesis via de novo pathway; (S)-dihydroorotate from bicarbonate: step 1/3. Functionally, large subunit of the glutamine-dependent carbamoyl phosphate synthetase (CPSase). CPSase catalyzes the formation of carbamoyl phosphate from the ammonia moiety of glutamine, carbonate, and phosphate donated by ATP, constituting the first step of 2 biosynthetic pathways, one leading to arginine and/or urea and the other to pyrimidine nucleotides. The large subunit (synthetase) binds the substrates ammonia (free or transferred from glutamine from the small subunit), hydrogencarbonate and ATP and carries out an ATP-coupled ligase reaction, activating hydrogencarbonate by forming carboxy phosphate which reacts with ammonia to form carbamoyl phosphate. In Streptococcus uberis (strain ATCC BAA-854 / 0140J), this protein is Carbamoyl phosphate synthase large chain.